Reading from the N-terminus, the 343-residue chain is Anthranilate phosphoribosyltransferase (343 aa).

5-phospho-alpha-D-ribose 1-diphosphate contacts are provided by residues Gly83, 86-87 (GD), Thr91, 93-96 (NIST), 111-119 (KHGGRSVSS), and Ser123. Residue Gly83 participates in anthranilate binding. Residue Ser95 coordinates Mg(2+). Anthranilate is bound at residue Arg169. Residues Asp228 and Glu229 each contribute to the Mg(2+) site.

This sequence belongs to the anthranilate phosphoribosyltransferase family. Homodimer. It depends on Mg(2+) as a cofactor.

The catalysed reaction is N-(5-phospho-beta-D-ribosyl)anthranilate + diphosphate = 5-phospho-alpha-D-ribose 1-diphosphate + anthranilate. The protein operates within amino-acid biosynthesis; L-tryptophan biosynthesis; L-tryptophan from chorismate: step 2/5. Catalyzes the transfer of the phosphoribosyl group of 5-phosphorylribose-1-pyrophosphate (PRPP) to anthranilate to yield N-(5'-phosphoribosyl)-anthranilate (PRA). The protein is Anthranilate phosphoribosyltransferase of Thiobacillus denitrificans (strain ATCC 25259 / T1).